Consider the following 102-residue polypeptide: Crustacean hyperglycemic hormones 3 (102 aa).

Positions 1–22 (MIALRLIAVTLVVAMAASTTWA) are cleaved as a signal peptide. Cystine bridges form between Cys35–Cys71, Cys51–Cys67, and Cys54–Cys80. Val100 bears the Valine amide mark.

The protein belongs to the arthropod CHH/MIH/GIH/VIH hormone family.

Its subcellular location is the secreted. Functionally, hormone found in the sinus gland of isopods and decapods which controls the blood sugar level. Has a secretagogue action over the amylase released from the midgut gland. May act as a stress hormone and may be involved in the control of molting and reproduction. The polypeptide is Crustacean hyperglycemic hormones 3 (CHH3) (Penaeus monodon (Giant tiger prawn)).